Consider the following 365-residue polypeptide: Popy Class I histocompatibility antigen, A-1 alpha chain (365 aa).

An N-terminal signal peptide occupies residues 1 to 24 (MAIMAPRTLLLLLSGALALTQTWA). The segment at 25–114 (GSHSMRYFST…LRGYYNQSDG (90 aa)) is alpha-1. Residues 25–308 (GSHSMRYFST…ELSSQPTIPI (284 aa)) lie on the Extracellular side of the membrane. N-linked (GlcNAc...) asparagine glycosylation occurs at N110. The alpha-2 stretch occupies residues 115–206 (GSHTIQRMFG…ENGKETLQRT (92 aa)). Disulfide bonds link C125-C188 and C227-C283. Residues 207 to 298 (DAPKTHMTHH…GLPEPLTLRW (92 aa)) form an alpha-3 region. Residues 209–297 (PKTHMTHHPV…EGLPEPLTLR (89 aa)) enclose the Ig-like C1-type domain. The segment at 299-308 (ELSSQPTIPI) is connecting peptide. A helical transmembrane segment spans residues 309-332 (VGIIAGLVLLGAVITGAVVAAVMW). Residues 333–365 (RRRNSDRKGGSYSQAASNDSAQGSDVSLTACKV) lie on the Cytoplasmic side of the membrane. The interval 340–365 (KGGSYSQAASNDSAQGSDVSLTACKV) is disordered. S343 carries the phosphoserine modification. Polar residues predominate over residues 343 to 359 (SYSQAASNDSAQGSDVS). Y344 is modified (phosphotyrosine). Phosphoserine is present on residues S345, S349, S352, S356, and S359.

This sequence belongs to the MHC class I family. Heterodimer of an alpha chain and a beta chain (beta-2-microglobulin).

It localises to the membrane. Involved in the presentation of foreign antigens to the immune system. In Pongo pygmaeus (Bornean orangutan), this protein is Popy Class I histocompatibility antigen, A-1 alpha chain.